The sequence spans 215 residues: E3 ubiquitin-protein ligase NleG (215 aa).

The segment at 136–189 is RING/U-box domain; the sequence is CPITLCIPETGVFVRNAKNSEICSLYDHNALTELIRRNAPHPLSREPFVPEMIV. The short motif at 213–215 is the PDZ-binding motif element; the sequence is TRI.

Belongs to the NleG E3 ligase family. Interacts with host GOPC (human protein). In terms of processing, two sizes of protein are detected upon expression in C.rodentium; only the smaller protein is secreted.

The protein resides in the secreted. Its subcellular location is the host cytoplasm. It carries out the reaction S-ubiquitinyl-[E2 ubiquitin-conjugating enzyme]-L-cysteine + [acceptor protein]-L-lysine = [E2 ubiquitin-conjugating enzyme]-L-cysteine + N(6)-ubiquitinyl-[acceptor protein]-L-lysine.. Functionally, effector proteins function to alter host cell physiology and promote bacterial survival in host tissues. This protein is an E3 ubiquitin-protein ligase that probably interferes with the host's ubiquitination pathway and targets host proteins for proteasomal degradation. Can ubiquitinate ubiquitin, giving rise to polyubiquitin chains (in vitro). Does not complement an nleG8 deletion in C.rodentium. This is E3 ubiquitin-protein ligase NleG from Escherichia coli O157:H7.